The sequence spans 392 residues: Selenide, water dikinase 1 (392 aa).

Position 2 is an N-acetylserine (Ser-2). Cys-31 is an active-site residue. ATP-binding positions include Lys-32, 67–69 (GMD), Asp-87, Asp-110, and 161–164 (GGQT). Asp-69 lines the Mg(2+) pocket. Asp-110 contacts Mg(2+). A Mg(2+)-binding site is contributed by Asp-265.

This sequence belongs to the selenophosphate synthase 1 family. Class II subfamily. As to quaternary structure, homodimer. Heterodimer with isoform 3. In terms of assembly, homodimer. Heterodimer with isoform 4. Homodimer. Heterodimer with isoform 1. As to quaternary structure, homodimer. Heterodimer with isoform 2. Requires Mg(2+) as cofactor. Gradually expressed during the cell cycle until G2/M phase and then decreases. As to expression, gradually expressed during the cell cycle until S phase and then decreases.

It is found in the cell membrane. It localises to the nucleus membrane. The protein localises to the cytoplasm. The catalysed reaction is hydrogenselenide + ATP + H2O = selenophosphate + AMP + phosphate + 2 H(+). Activated by phosphate ions and by potassium ions. Its function is as follows. Synthesizes selenophosphate from selenide and ATP. The polypeptide is Selenide, water dikinase 1 (SEPHS1) (Homo sapiens (Human)).